The following is a 221-amino-acid chain: UPF0502 protein XOO0224 (221 aa).

Belongs to the UPF0502 family.

The protein is UPF0502 protein XOO0224 of Xanthomonas oryzae pv. oryzae (strain MAFF 311018).